Consider the following 200-residue polypeptide: MKIILATSNKHKVLELKEILKDFEIYAFDEVLMPFEIEENGKTFKENALIKARAVFNALDEKQKKDFIALSDDSGICVDVLEGNPGIYSARFSGKGDDKSNRDKLVNEMIKKGFKQSKAYYVAAIAMVGLMGEFSTHGTMHGKVIDTEKGENGFGYDSLFIPKGFDKTLAQLSVDEKNNISHRFKALELAKIILKILNKG.

7 to 12 (TSNKHK) serves as a coordination point for substrate. Positions 38 and 73 each coordinate Mg(2+). Catalysis depends on D73, which acts as the Proton acceptor. Residues S74, 154-157 (FGYD), K177, and 182-183 (HR) contribute to the substrate site.

The protein belongs to the HAM1 NTPase family. In terms of assembly, homodimer. It depends on Mg(2+) as a cofactor.

It carries out the reaction XTP + H2O = XMP + diphosphate + H(+). The enzyme catalyses dITP + H2O = dIMP + diphosphate + H(+). It catalyses the reaction ITP + H2O = IMP + diphosphate + H(+). Pyrophosphatase that catalyzes the hydrolysis of nucleoside triphosphates to their monophosphate derivatives, with a high preference for the non-canonical purine nucleotides XTP (xanthosine triphosphate), dITP (deoxyinosine triphosphate) and ITP. Seems to function as a house-cleaning enzyme that removes non-canonical purine nucleotides from the nucleotide pool, thus preventing their incorporation into DNA/RNA and avoiding chromosomal lesions. This is dITP/XTP pyrophosphatase from Campylobacter jejuni subsp. jejuni serotype O:2 (strain ATCC 700819 / NCTC 11168).